The chain runs to 1036 residues: Lethal(2) giant larvae protein homolog 1 (1036 aa).

10 WD repeats span residues 38–71 (SALA…FTGL), 78–119 (VTQM…GLSF), 139–175 (VTVV…GQTL), 199–233 (SLQG…EHVF), 239–271 (LESL…GSPP), 289–331 (AINK…ETLV), 339–373 (VIDF…VLDL), 395–473 (TCSA…YKLS), 517–592 (QKVA…RVLI), and 601–662 (TAVA…LRQS). Ser-662 is modified (phosphoserine). A disordered region spans residues 670-694 (RVSGKKRATTASSKLQEANAQLAEQ). A compositionally biased stretch (polar residues) spans 678–693 (TTASSKLQEANAQLAE). WD repeat units follow at residues 722 to 782 (VRCL…KEVQ), 791 to 843 (AIAV…VSAK), 848 to 901 (LTAH…VHYS), and 915 to 938 (VFTR…SLSA). A Phosphothreonine modification is found at Thr-957. Ser-964, Ser-982, and Ser-989 each carry phosphoserine. Positions 980-1002 (PESCEGSPSSAHSKRADTMEPPE) are disordered.

This sequence belongs to the WD repeat L(2)GL family. As to quaternary structure, associated with nonmuscle myosin II heavy chain. Interacts with PRKCI/aPKC, PARD6B/Par-6 and PARD6A. Interacts with STX4A. Interacts with DCAF1. Interacts with RAB10 (GDP-bound form); the interaction is direct and promotes RAB10 association with membranes and activation through competition with the Rab inhibitor GDI1. Post-translationally, phosphorylated by PRKCI. Expressed at high level in the testis and at lower level in ovary, brain, spleen and kidney.

It is found in the early endosome membrane. The protein localises to the golgi apparatus. Its subcellular location is the trans-Golgi network membrane. It localises to the golgi apparatus membrane. The protein resides in the cell projection. It is found in the axon. The protein localises to the cytoplasm. Its subcellular location is the cytoskeleton. In terms of biological role, cortical cytoskeleton protein found in a complex involved in maintaining cell polarity and epithelial integrity. Involved in the regulation of mitotic spindle orientation, proliferation, differentiation and tissue organization of neuroepithelial cells. Involved in axonogenesis through RAB10 activation thereby regulating vesicular membrane trafficking toward the axonal plasma membrane. The protein is Lethal(2) giant larvae protein homolog 1 (Llgl1) of Rattus norvegicus (Rat).